The sequence spans 331 residues: Phosphoribosylformylglycinamidine cyclo-ligase (331 aa).

The protein belongs to the AIR synthase family.

The protein localises to the cytoplasm. The enzyme catalyses 2-formamido-N(1)-(5-O-phospho-beta-D-ribosyl)acetamidine + ATP = 5-amino-1-(5-phospho-beta-D-ribosyl)imidazole + ADP + phosphate + H(+). It participates in purine metabolism; IMP biosynthesis via de novo pathway; 5-amino-1-(5-phospho-D-ribosyl)imidazole from N(2)-formyl-N(1)-(5-phospho-D-ribosyl)glycinamide: step 2/2. The sequence is that of Phosphoribosylformylglycinamidine cyclo-ligase from Clostridium botulinum (strain Okra / Type B1).